The following is a 194-amino-acid chain: Small ribosomal subunit protein uS4c (194 aa).

Positions 84-144 constitute an S4 RNA-binding domain; it reads MRLDTLLYRT…KEILKSLNDK (61 aa).

The protein belongs to the universal ribosomal protein uS4 family. Part of the 30S ribosomal subunit. Contacts protein S5. The interaction surface between S4 and S5 is involved in control of translational fidelity.

It localises to the plastid. It is found in the chloroplast. Its function is as follows. One of the primary rRNA binding proteins, it binds directly to 16S rRNA where it nucleates assembly of the body of the 30S subunit. With S5 and S12 plays an important role in translational accuracy. This Bigelowiella natans (Pedinomonas minutissima) protein is Small ribosomal subunit protein uS4c (rps4).